The following is a 255-amino-acid chain: Ribonuclease HII (255 aa).

One can recognise an RNase H type-2 domain in the interval 72-255 (AIICGIDEVG…KSFEPIKSLL (184 aa)). Residues Asp78, Glu79, and Asp170 each contribute to the a divalent metal cation site.

The protein belongs to the RNase HII family. Requires Mn(2+) as cofactor. It depends on Mg(2+) as a cofactor.

The protein localises to the cytoplasm. The enzyme catalyses Endonucleolytic cleavage to 5'-phosphomonoester.. Functionally, endonuclease that specifically degrades the RNA of RNA-DNA hybrids. This is Ribonuclease HII from Staphylococcus aureus (strain Mu3 / ATCC 700698).